The primary structure comprises 415 residues: U-box domain-containing protein 29 (415 aa).

The region spanning 11 to 85 (TVPSFFKCPI…NIWSDSIGRR (75 aa)) is the U-box domain. 2 ARM repeats span residues 221–263 (KSKL…TISK) and 265–307 (KRVR…TLSS).

As to quaternary structure, binds to SD129 and SD25.

It carries out the reaction S-ubiquitinyl-[E2 ubiquitin-conjugating enzyme]-L-cysteine + [acceptor protein]-L-lysine = [E2 ubiquitin-conjugating enzyme]-L-cysteine + N(6)-ubiquitinyl-[acceptor protein]-L-lysine.. It functions in the pathway protein modification; protein ubiquitination. Its function is as follows. Functions as an E3 ubiquitin ligase. This chain is U-box domain-containing protein 29 (PUB29), found in Arabidopsis thaliana (Mouse-ear cress).